We begin with the raw amino-acid sequence, 625 residues long: Archaeosine synthase subunit alpha (625 aa).

The PUA domain maps to 556 to 624 (KYVVKIDDFV…VAVDVRHVKK (69 aa)).

This sequence belongs to the archaeosine synthase type 1 family. Forms a robust complex with the archaeosine synthase beta subunit RaSEA. Formation of this complex highly increases lysine transfer activity. The complex likely consists of an alpha(2)beta(2) heterotetrameric structure.

The enzyme catalyses 7-cyano-7-carbaguanosine(15) in tRNA + L-lysine = 7-N-[(5S)-5-amino-5-carboxypentyl]formamidino-7-deazaguanosine(15) in tRNA. Its pathway is tRNA modification; archaeosine-tRNA biosynthesis. Functions in the biosynthesis of archaeosine, a modified nucleoside present in the dihydrouridine loop (D-loop) of archaeal tRNAs. Catalyzes the addition of L-lysine to the cyano group of 7-cyano-7-deazaguanine (preQ0)-modified tRNAs at position 15, to generate q0kN15-tRNA, a q0N lysine adduct identified as 7-N-[(5S)-5-amino-5-carboxypentyl]formamidino-7-deazaguanosine. The chain is Archaeosine synthase subunit alpha from Methanosarcina acetivorans (strain ATCC 35395 / DSM 2834 / JCM 12185 / C2A).